The sequence spans 89 residues: Small ribosomal subunit protein uS15 (89 aa).

The protein belongs to the universal ribosomal protein uS15 family. Part of the 30S ribosomal subunit. Forms a bridge to the 50S subunit in the 70S ribosome, contacting the 23S rRNA.

Functionally, one of the primary rRNA binding proteins, it binds directly to 16S rRNA where it helps nucleate assembly of the platform of the 30S subunit by binding and bridging several RNA helices of the 16S rRNA. Forms an intersubunit bridge (bridge B4) with the 23S rRNA of the 50S subunit in the ribosome. The polypeptide is Small ribosomal subunit protein uS15 (Orientia tsutsugamushi (strain Ikeda) (Rickettsia tsutsugamushi)).